We begin with the raw amino-acid sequence, 306 residues long: MKYVIGIDGGGSKTHMKISTLDYKVLLEVFKGPSNINSSTKEEVKRVLQELIMEGLGKLGQSLEECSAICIGTAGADRTEDKSIIEDMIRSLGYMGKIIVVNDAEIALAGGIEKREGIIVISGTGSICYGRNKEGRSARSGGWGHIIGDEGSGYDIGIKAIKAALKSFDKRGEKTILEGDILDFLKLKSHEDLINYIYRSGVTKKEIASLTRVVNSAYIKGDLVSKRILKEAARELFLSVKAVVEVLSMQNKKVVLTTAGGVINNINYLYDEFRKFLNLNYPKVKIISMKNDSAFGAVIIARSECD.

Serine 12 provides a ligand contact to ATP. Asparagine 35 contributes to the substrate binding site. Threonine 124 contacts ATP. Substrate-binding positions include 142–144 and aspartate 149; that span reads GWG. Alanine 208 contributes to the ATP binding site.

Belongs to the eukaryotic-type N-acetylglucosamine kinase family. Mg(2+) serves as cofactor.

It localises to the cytoplasm. It catalyses the reaction N-acetyl-D-glucosamine + ATP = N-acetyl-D-glucosamine 6-phosphate + ADP + H(+). The enzyme catalyses N-acetyl-D-muramate + ATP = N-acetyl-D-muramate 6-phosphate + ADP + H(+). Its pathway is cell wall biogenesis; peptidoglycan recycling. Catalyzes the ATP-dependent phosphorylation of both cell wall (peptidoglycan) amino sugars, N-acetylmuramic acid (MurNAc) and N-acetylglucosamine (GlcNAc), at the 6-hydroxyl group. Neither the non-N-acetylated forms of the cell wall sugars, i.e., glucosamine and/or muramic acid, nor epimeric hexoses or 1,6-anhydro-MurNAc are substrates for the enzyme. May have a role in the rescue of the murein sugars GlcNAc and MurNAc released from muropeptides during cell wall turnover in C.acetobutylicum. The protein is N-acetylmuramic acid/N-acetylglucosamine kinase of Clostridium acetobutylicum (strain ATCC 824 / DSM 792 / JCM 1419 / IAM 19013 / LMG 5710 / NBRC 13948 / NRRL B-527 / VKM B-1787 / 2291 / W).